A 329-amino-acid polypeptide reads, in one-letter code: UDP-N-acetylenolpyruvoylglucosamine reductase (329 aa).

The 165-residue stretch at 28–192 folds into the FAD-binding PCMH-type domain; it reads RVGGPADLLC…ARVEVRLHAG (165 aa). Residue arginine 172 is part of the active site. The tract at residues 202-227 is disordered; it reads REDRERRRATQPLDRPTFGSTFTNPP. Residue serine 221 is the Proton donor of the active site. Glutamate 291 is a catalytic residue. Residues 307–329 form a disordered region; the sequence is DGHAAAGGGPGAASGGVRPPEAT. Gly residues predominate over residues 311–320; that stretch reads AAGGGPGAAS.

It belongs to the MurB family. FAD serves as cofactor.

It is found in the cytoplasm. It carries out the reaction UDP-N-acetyl-alpha-D-muramate + NADP(+) = UDP-N-acetyl-3-O-(1-carboxyvinyl)-alpha-D-glucosamine + NADPH + H(+). The protein operates within cell wall biogenesis; peptidoglycan biosynthesis. Cell wall formation. In Anaeromyxobacter sp. (strain K), this protein is UDP-N-acetylenolpyruvoylglucosamine reductase.